Consider the following 228-residue polypeptide: Transmembrane protein 186 (228 aa).

Over 1 to 93 (MDMMMMSTRL…RGLRALSRLK (93 aa)) the chain is Mitochondrial matrix. The helical transmembrane segment at 94-112 (LLQTGITVVLLPTVYYLHL) threads the bilayer. The Mitochondrial intermembrane portion of the chain corresponds to 113 to 118 (QGQASV). Residues 119–141 (LVLNRSIGIALFAGVMLYSISHF) form a helical membrane-spanning segment. At 142-228 (VRRVVGMMYL…AFGKVFGSLS (87 aa)) the chain is on the mitochondrial matrix side.

It belongs to the TMEM186 family.

It localises to the mitochondrion inner membrane. May be required for efficient assembly of the mitochondrial complex I. The chain is Transmembrane protein 186 from Danio rerio (Zebrafish).